A 31-amino-acid chain; its full sequence is Cytochrome b6-f complex subunit 6 (31 aa).

The helical transmembrane segment at isoleucine 4 to asparagine 26 threads the bilayer.

This sequence belongs to the PetL family. The 4 large subunits of the cytochrome b6-f complex are cytochrome b6, subunit IV (17 kDa polypeptide, PetD), cytochrome f and the Rieske protein, while the 4 small subunits are PetG, PetL, PetM and PetN. The complex functions as a dimer.

It localises to the plastid. It is found in the chloroplast thylakoid membrane. In terms of biological role, component of the cytochrome b6-f complex, which mediates electron transfer between photosystem II (PSII) and photosystem I (PSI), cyclic electron flow around PSI, and state transitions. PetL is important for photoautotrophic growth as well as for electron transfer efficiency and stability of the cytochrome b6-f complex. This is Cytochrome b6-f complex subunit 6 from Calycanthus floridus var. glaucus (Eastern sweetshrub).